Reading from the N-terminus, the 1264-residue chain is Ubiquitin carboxyl-terminal hydrolase usp-48 (1264 aa).

Positions 108 to 430 (AGLINGGNFC…ACYGLLYRRR (323 aa)) constitute a USP domain. Cys-117 serves as the catalytic Nucleophile. His-366 serves as the catalytic Proton acceptor. Disordered stretches follow at residues 390-415 (IPKP…KEKY), 522-610 (AKGE…IMDT), and 630-679 (TVEV…PVSS). Basic and acidic residues-rich tracts occupy residues 403-415 (KTEK…KEKY) and 532-543 (EASENEEKKKNE). A coiled-coil region spans residues 516–547 (AQEYEVAKGEKKKKKKEASENEEKKKNEEDEA). A compositionally biased stretch (low complexity) spans 565-575 (SEPSTSAAATE). Composition is skewed to polar residues over residues 587-599 (ETPN…STQV) and 663-678 (NGTN…QPVS).

It belongs to the peptidase C19 family. As to expression, broadly expressed. Expressed in germline.

The protein resides in the nucleus. It localises to the chromosome. The catalysed reaction is Thiol-dependent hydrolysis of ester, thioester, amide, peptide and isopeptide bonds formed by the C-terminal Gly of ubiquitin (a 76-residue protein attached to proteins as an intracellular targeting signal).. Recognizes and hydrolyzes the peptide bond at the C-terminal Gly of ubiquitin. Involved in the processing of poly-ubiquitin precursors as well as that of ubiquitinated proteins. Required post-developmentally to restrict the plasticity of epidermal cells, probably by regulating gene expression. The sequence is that of Ubiquitin carboxyl-terminal hydrolase usp-48 from Caenorhabditis elegans.